The chain runs to 406 residues: S-adenosylmethionine synthase (406 aa).

Position 17 (H17) interacts with ATP. A Mg(2+)-binding site is contributed by D19. E45 is a K(+) binding site. Positions 58 and 101 each coordinate L-methionine. The tract at residues 101 to 111 (QSAEINQGVAR) is flexible loop. ATP contacts are provided by residues 178–180 (DGK), D258, 264–265 (RK), A281, and K285. D258 lines the L-methionine pocket. K289 provides a ligand contact to L-methionine.

It belongs to the AdoMet synthase family. In terms of assembly, homotetramer; dimer of dimers. The cofactor is Mg(2+). K(+) is required as a cofactor.

The protein localises to the cytoplasm. It carries out the reaction L-methionine + ATP + H2O = S-adenosyl-L-methionine + phosphate + diphosphate. The protein operates within amino-acid biosynthesis; S-adenosyl-L-methionine biosynthesis; S-adenosyl-L-methionine from L-methionine: step 1/1. In terms of biological role, catalyzes the formation of S-adenosylmethionine (AdoMet) from methionine and ATP. The overall synthetic reaction is composed of two sequential steps, AdoMet formation and the subsequent tripolyphosphate hydrolysis which occurs prior to release of AdoMet from the enzyme. In Bifidobacterium longum (strain NCC 2705), this protein is S-adenosylmethionine synthase.